The sequence spans 287 residues: mRNA-capping enzyme regulatory subunit OPG124 (287 aa).

This sequence belongs to the orthopoxvirus mRNA-capping enzyme regulatory subunit family. As to quaternary structure, interacts with the late transcription elongation factor VLTF-4/OPG110. Interacts with the late transcription factors VLTF-1.

The protein localises to the virion. Acts with RNA polymerase to initiate transcription from late gene promoters. This Monkeypox virus protein is mRNA-capping enzyme regulatory subunit OPG124 (OPG124).